A 304-amino-acid polypeptide reads, in one-letter code: MNWITNYVRPKINSMLGRREVPENLWIKCPETGEMVFHRDLEENKWVIPQSGHHMKMPARARLKDLFDGGIYETLPQPKVAQDPLKFRDSKKYLDRLRDSRAKTELEDTIVAGLGLVQGVKLVAVVHEFNFIGGSLGMAAGEAIIRAFEKAIAEKCPLVMFPASGGARMQEGILSLMQLPRTTVAVNLLKEAGLPYIVVLTNPTTGGVTASYAMLGDIHLAEPGAEIGFAGKRVIEQTLREKLPDGFQTSEYLLEHGMVDMVVKRHDLPATLARVLKILMKKPVEAARRESGSQVSALPVAARA.

The CoA carboxyltransferase N-terminal domain occupies 25-294 (LWIKCPETGE…EAARRESGSQ (270 aa)).

This sequence belongs to the AccD/PCCB family. As to quaternary structure, acetyl-CoA carboxylase is a heterohexamer composed of biotin carboxyl carrier protein (AccB), biotin carboxylase (AccC) and two subunits each of ACCase subunit alpha (AccA) and ACCase subunit beta (AccD).

The protein resides in the cytoplasm. It catalyses the reaction N(6)-carboxybiotinyl-L-lysyl-[protein] + acetyl-CoA = N(6)-biotinyl-L-lysyl-[protein] + malonyl-CoA. The protein operates within lipid metabolism; malonyl-CoA biosynthesis; malonyl-CoA from acetyl-CoA: step 1/1. In terms of biological role, component of the acetyl coenzyme A carboxylase (ACC) complex. Biotin carboxylase (BC) catalyzes the carboxylation of biotin on its carrier protein (BCCP) and then the CO(2) group is transferred by the transcarboxylase to acetyl-CoA to form malonyl-CoA. The protein is Acetyl-coenzyme A carboxylase carboxyl transferase subunit beta of Sinorhizobium fredii (strain NBRC 101917 / NGR234).